The following is an 83-amino-acid chain: Translational regulator CsrA (83 aa).

The protein belongs to the CsrA/RsmA family. In terms of assembly, homodimer; the beta-strands of each monomer intercalate to form a hydrophobic core, while the alpha-helices form wings that extend away from the core.

The protein localises to the cytoplasm. Its function is as follows. A translational regulator that binds mRNA to regulate translation initiation and/or mRNA stability. Usually binds in the 5'-UTR at or near the Shine-Dalgarno sequence preventing ribosome-binding, thus repressing translation. Its main target seems to be the major flagellin gene, while its function is anatagonized by FliW. The chain is Translational regulator CsrA from Thermotoga maritima (strain ATCC 43589 / DSM 3109 / JCM 10099 / NBRC 100826 / MSB8).